The chain runs to 138 residues: uncharacterized protein (138 aa).

This is an uncharacterized protein from Archaeoglobus fulgidus (strain ATCC 49558 / DSM 4304 / JCM 9628 / NBRC 100126 / VC-16).